A 292-amino-acid polypeptide reads, in one-letter code: RNA 5'-monophosphate methyltransferase (292 aa).

Residues 1 to 21 (MAVPTELDGGSVKETAAEEES) are disordered. S-adenosyl-L-methionine-binding positions include Arg46, Asn76, Asp110, 135 to 136 (DF), and Met164. In terms of domain architecture, Bin3-type SAM spans 53-274 (ELLRQLFPES…KQTIETHPIP (222 aa)).

Belongs to the methyltransferase superfamily. Interacts with DICER1; the interaction may be mediated by RNA.

The protein resides in the cytoplasm. It carries out the reaction a 5'-end 5'-phospho-ribonucleoside-RNA + S-adenosyl-L-methionine = a 5'-end (5'-methylphospho)-ribonucleoside-RNA + S-adenosyl-L-homocysteine. The catalysed reaction is a 5'-end 5'-phospho-ribonucleoside-RNA + 2 S-adenosyl-L-methionine = a 5'-end (5'-bismethylphospho)-ribonucleoside-RNA + 2 S-adenosyl-L-homocysteine. Its function is as follows. O-methyltransferase that specifically monomethylates 5'-monophosphate of cytoplasmic histidyl tRNA (tRNA(His)), acting as a capping enzyme by protecting tRNA(His) from cleavage by DICER1. Also able, with less efficiently, to methylate the 5' monophosphate of a subset of pre-miRNAs, acting as a negative regulator of miRNA processing. The 5' monophosphate of pre-miRNAs is recognized by DICER1 and is required for pre-miRNAs processing: methylation at this position reduces the processing of pre-miRNAs by DICER1. Was also reported to mediate dimethylation of pre-miR-145; however dimethylation cannot be reproduced by another group which observes a monomethylation of pre-miR-145. The chain is RNA 5'-monophosphate methyltransferase from Homo sapiens (Human).